The chain runs to 602 residues: Probable beta-glucosidase btgE (602 aa).

Residues 1–18 (MRGAFLAAAAAVAGTAMA) form the signal peptide. 2 disordered regions span residues 61–94 (PPTL…SVVT) and 116–166 (GVDA…TSFS). The span at 74–94 (PSSSSSSEVPSVPSSESSVVT) shows a compositional bias: low complexity. Residues 152–166 (TSESPLPTPGVTSFS) show a composition bias toward polar residues. Glu443 functions as the Proton donor in the catalytic mechanism. Residue Glu538 is the Nucleophile of the active site.

It belongs to the glycosyl hydrolase 17 family.

Its subcellular location is the secreted. It localises to the cell wall. It catalyses the reaction Hydrolysis of terminal, non-reducing beta-D-glucosyl residues with release of beta-D-glucose.. It participates in glycan metabolism; cellulose degradation. Functionally, beta-glucosidases are one of a number of cellulolytic enzymes involved in the degradation of cellulosic biomass. Catalyzes the last step releasing glucose from the inhibitory cellobiose. The polypeptide is Probable beta-glucosidase btgE (btgE) (Aspergillus flavus (strain ATCC 200026 / FGSC A1120 / IAM 13836 / NRRL 3357 / JCM 12722 / SRRC 167)).